The chain runs to 405 residues: Histidine decarboxylase (405 aa).

H121 is a binding site for substrate. An N6-(pyridoxal phosphate)lysine modification is found at K234.

Belongs to the group II decarboxylase family. As to quaternary structure, homotetramer. Requires pyridoxal 5'-phosphate as cofactor.

It catalyses the reaction L-histidine + H(+) = histamine + CO2. Its pathway is siderophore biosynthesis; pseudomonine biosynthesis. This chain is Histidine decarboxylase, found in Pseudomonas fluorescens.